The chain runs to 375 residues: Succinyl-diaminopimelate desuccinylase (375 aa).

His66 provides a ligand contact to Zn(2+). The active site involves Asp68. Asp99 lines the Zn(2+) pocket. Glu133 (proton acceptor) is an active-site residue. Positions 134, 162, and 348 each coordinate Zn(2+).

This sequence belongs to the peptidase M20A family. DapE subfamily. In terms of assembly, homodimer. Zn(2+) serves as cofactor. Requires Co(2+) as cofactor.

The enzyme catalyses N-succinyl-(2S,6S)-2,6-diaminopimelate + H2O = (2S,6S)-2,6-diaminopimelate + succinate. The protein operates within amino-acid biosynthesis; L-lysine biosynthesis via DAP pathway; LL-2,6-diaminopimelate from (S)-tetrahydrodipicolinate (succinylase route): step 3/3. Its function is as follows. Catalyzes the hydrolysis of N-succinyl-L,L-diaminopimelic acid (SDAP), forming succinate and LL-2,6-diaminopimelate (DAP), an intermediate involved in the bacterial biosynthesis of lysine and meso-diaminopimelic acid, an essential component of bacterial cell walls. This is Succinyl-diaminopimelate desuccinylase from Klebsiella pneumoniae (strain 342).